Here is a 266-residue protein sequence, read N- to C-terminus: ATP synthase subunit a (266 aa).

The next 5 membrane-spanning stretches (helical) occupy residues 28–48 (SINVDSMFFSIALGILFLVIF), 88–108 (LIAPLALTIFVWVFLMNMMDL), 141–161 (DVNITLSMALGVFILVLFYSI), 206–226 (LFGNMYAGELIFILIAGLLPW), and 237–257 (AIFHILIITLQAFIFMVLTVV).

This sequence belongs to the ATPase A chain family. As to quaternary structure, F-type ATPases have 2 components, CF(1) - the catalytic core - and CF(0) - the membrane proton channel. CF(1) has five subunits: alpha(3), beta(3), gamma(1), delta(1), epsilon(1). CF(0) has three main subunits: a(1), b(2) and c(9-12). The alpha and beta chains form an alternating ring which encloses part of the gamma chain. CF(1) is attached to CF(0) by a central stalk formed by the gamma and epsilon chains, while a peripheral stalk is formed by the delta and b chains.

The protein localises to the cell inner membrane. Its function is as follows. Key component of the proton channel; it plays a direct role in the translocation of protons across the membrane. The polypeptide is ATP synthase subunit a (Pectobacterium atrosepticum (strain SCRI 1043 / ATCC BAA-672) (Erwinia carotovora subsp. atroseptica)).